Here is a 100-residue protein sequence, read N- to C-terminus: uncharacterized protein (100 aa).

It is found in the virion. This is an uncharacterized protein from Acanthamoeba polyphaga mimivirus (APMV).